A 281-amino-acid polypeptide reads, in one-letter code: Probable endonuclease 4 (281 aa).

Zn(2+) is bound by residues His69, His109, Glu145, Asp179, His182, His216, Asp229, His231, and Glu261.

This sequence belongs to the AP endonuclease 2 family. The cofactor is Zn(2+).

The catalysed reaction is Endonucleolytic cleavage to 5'-phosphooligonucleotide end-products.. Its function is as follows. Endonuclease IV plays a role in DNA repair. It cleaves phosphodiester bonds at apurinic or apyrimidinic (AP) sites, generating a 3'-hydroxyl group and a 5'-terminal sugar phosphate. The polypeptide is Probable endonuclease 4 (Parabacteroides distasonis (strain ATCC 8503 / DSM 20701 / CIP 104284 / JCM 5825 / NCTC 11152)).